The sequence spans 425 residues: Sucrose-phosphatase 2 (425 aa).

Belongs to the sucrose phosphatase family. In terms of assembly, homodimer. Mg(2+) is required as a cofactor.

The catalysed reaction is sucrose 6(F)-phosphate + H2O = sucrose + phosphate. It functions in the pathway glycan biosynthesis; sucrose biosynthesis; sucrose from D-fructose 6-phosphate and UDP-alpha-D-glucose: step 2/2. Its activity is regulated as follows. Inhibited by EDTA. Functionally, catalyzes the final step of sucrose synthesis. The chain is Sucrose-phosphatase 2 (SPP2) from Nicotiana tabacum (Common tobacco).